The primary structure comprises 567 residues: Oxygen-dependent choline dehydrogenase (567 aa).

Position 4–33 (4–33 (DYIIIGAGSAGNVLAARLTEDADVTVLLLE)) interacts with FAD. His-473 (proton acceptor) is an active-site residue.

This sequence belongs to the GMC oxidoreductase family. It depends on FAD as a cofactor.

The enzyme catalyses choline + A = betaine aldehyde + AH2. The catalysed reaction is betaine aldehyde + NAD(+) + H2O = glycine betaine + NADH + 2 H(+). It participates in amine and polyamine biosynthesis; betaine biosynthesis via choline pathway; betaine aldehyde from choline (cytochrome c reductase route): step 1/1. Its function is as follows. Involved in the biosynthesis of the osmoprotectant glycine betaine. Catalyzes the oxidation of choline to betaine aldehyde and betaine aldehyde to glycine betaine at the same rate. This is Oxygen-dependent choline dehydrogenase from Yersinia pseudotuberculosis serotype IB (strain PB1/+).